Here is a 368-residue protein sequence, read N- to C-terminus: Phosphotransferase IIC component GlvC (368 aa).

Residues methionine 1–alanine 11 lie on the Periplasmic side of the membrane. A PTS EIIC type-1 domain is found at methionine 1–aspartate 368. A helical membrane pass occupies residues methionine 12–leucine 32. The Cytoplasmic segment spans residues glutamine 33–glycine 59. A helical membrane pass occupies residues glycine 60–alanine 80. Topologically, residues lysine 81–arginine 86 are periplasmic. Residues alanine 87–methionine 107 traverse the membrane as a helical segment. The Cytoplasmic segment spans residues threonine 108–methionine 129. A helical membrane pass occupies residues methionine 130–valine 150. At threonine 151–serine 173 the chain is on the periplasmic side. A helical membrane pass occupies residues tyrosine 174–tryptophan 194. At proline 195–glutamine 198 the chain is on the cytoplasmic side. The helical transmembrane segment at methionine 199–phenylalanine 221 threads the bilayer. Topologically, residues leucine 222–arginine 224 are periplasmic. A helical membrane pass occupies residues isoleucine 225 to alanine 245. The Cytoplasmic segment spans residues valine 246 to glycine 276. Residues phenylalanine 277–phenylalanine 297 traverse the membrane as a helical segment. Residues threonine 298 to lysine 306 are Periplasmic-facing. Residues valine 307–leucine 327 form a helical membrane-spanning segment. A topological domain (cytoplasmic) is located at residue glutamate 328. Residues phenylalanine 329–methionine 349 form a helical membrane-spanning segment. At serine 350 to aspartate 368 the chain is on the periplasmic side.

It localises to the cell inner membrane. Its function is as follows. The phosphoenolpyruvate-dependent sugar phosphotransferase system (PTS), a major carbohydrate active -transport system, catalyzes the phosphorylation of incoming sugar substrates concomitant with their translocation across the cell membrane. This operon may be cryptic in wild-type K12 strains. The polypeptide is Phosphotransferase IIC component GlvC (Escherichia coli (strain K12)).